A 99-amino-acid chain; its full sequence is Small ribosomal subunit protein uS14c (99 aa).

Residues 46–66 are disordered; the sequence is LQSSPRNSAPTRLHRRCSSTG.

The protein belongs to the universal ribosomal protein uS14 family. In terms of assembly, part of the 30S ribosomal subunit.

Its subcellular location is the plastid. The protein resides in the chloroplast. Binds 16S rRNA, required for the assembly of 30S particles. This is Small ribosomal subunit protein uS14c from Pinus thunbergii (Japanese black pine).